The following is a 306-amino-acid chain: MSTLGNQYDNSLVSNAFGFLRLPMNFQPYDSDADWVITGVPFDMATSGRAGGRHGPAAIRQVSTNLAWEHNRFPWNFDMRERLNVVDCGDLVYAFGDAREMSEKLQAHAEKLLAAGKRMLSFGGDHFVTLPLLRAHAKHFGKMALVHFDAHTDTYANGCEFDHGTMFYTAPKEGLIDPNHSVQIGIRTEFDKDNGFTVLDACQVNDRSVDDVIAQVKQIVGDMPVYLTFDIDCLDPAFAPGTGTPVIGGLTSDRAIKLVRGLKDLNIVGMDVVEVAPAYDQSEITALAAATLALEMLYIQAAKKGE.

Mn(2+) contacts are provided by H126, D149, H151, D153, D230, and D232.

The protein belongs to the arginase family. Agmatinase subfamily. Requires Mn(2+) as cofactor.

It catalyses the reaction agmatine + H2O = urea + putrescine. It functions in the pathway amine and polyamine biosynthesis; putrescine biosynthesis via agmatine pathway; putrescine from agmatine: step 1/1. In terms of biological role, catalyzes the formation of putrescine from agmatine. This Shigella boydii serotype 18 (strain CDC 3083-94 / BS512) protein is Agmatinase.